The primary structure comprises 205 residues: Non-specific lipid transfer protein GPI-anchored 21 (205 aa).

An N-terminal signal peptide occupies residues 1–27 (MNSNSFLISAALIFSLLSSNSPTSILA). 4 disulfides stabilise this stretch: C33–C75, C44–C59, C60–C100, and C73–C109. An N-linked (GlcNAc...) asparagine glycan is attached at N89. The interval 116-182 (LPTPGPASFG…FAPPPPSSSP (67 aa)) is disordered. A compositionally biased stretch (low complexity) spans 126 to 156 (PTTSPTDSQTSDPEGSASFRPPTSPTTSQTP). S179 carries the GPI-anchor amidated serine lipid modification. Positions 180–205 (SSPSSSHSLKLSYLLFAFAFTIIKFI) are cleaved as a propeptide — removed in mature form.

The protein belongs to the plant LTP family.

It localises to the cell membrane. Probable lipid transfer protein. This chain is Non-specific lipid transfer protein GPI-anchored 21, found in Arabidopsis thaliana (Mouse-ear cress).